The primary structure comprises 429 residues: Phosphoribosylamine--glycine ligase (429 aa).

An ATP-grasp domain is found at 109 to 316 (KDFLARHKIP…LVELCLAACE (208 aa)). Residue 135-196 (LREKGAPIVI…EEFLDGEEAS (62 aa)) participates in ATP binding. Residues 212–236 (SQDHKRVGDKDTGPNTGGMGAYSPA) are disordered. The segment covering 213-223 (QDHKRVGDKDT) has biased composition (basic and acidic residues). Residues glutamate 286 and asparagine 288 each coordinate Mg(2+).

Belongs to the GARS family. In terms of assembly, monomer. Mg(2+) is required as a cofactor. The cofactor is Mn(2+).

The catalysed reaction is 5-phospho-beta-D-ribosylamine + glycine + ATP = N(1)-(5-phospho-beta-D-ribosyl)glycinamide + ADP + phosphate + H(+). The protein operates within purine metabolism; IMP biosynthesis via de novo pathway; N(1)-(5-phospho-D-ribosyl)glycinamide from 5-phospho-alpha-D-ribose 1-diphosphate: step 2/2. Catalyzes the reversible conversion of phosphoribosylamine to glycinamide ribonucleotide, an enzymatic step in purine biosynthesis pathway. This chain is Phosphoribosylamine--glycine ligase (purD), found in Escherichia coli (strain K12).